A 625-amino-acid chain; its full sequence is MVKGEKRSEMMLNLFGDNSEEEEIESEHECNRRQPNYASDEAEGGVEPEGEGEAEVEVHGEAEAESDGEQGDVELDPGESEGEREQSSQEADPQEESEARDSDSDNKEEEHGGRVAKKRRQEVVESGSERSGEKHYESEDEEVDQTRSPRSPSEEKEEVQVAQSDVNIRNVFGSSDDEDAEEYVRNDVEQDEHRSPIEDEEGSEKDLRPDDMVLDDIIPEEDPQYESEAEHVEARYRERPVGPPLEVEVPFRPPPGDPVKMNMIKVSNIMGIDPKPFDAKTFVEEDTFMTDEPGAKNRIRLDNNIVRHRFVKSRDGKTYSESNARFVRWSDGSLQLLIGNEVLNITEQDAKEDQNHLFIKHEKGILQSQGRILKKMRFTPSSLTSNSHRLLTAIVESRQKKAFKVKNCVTDIDPEREKEKREKAESQNLKASTKLSQAREKIKRKYPLPVERRQLSTGYLEDALDEDDEDYRSNRGYEEDLEAEAQRERRILNAKKSHKGIPGRSSMTSARPSRRQMEYSESEREESEYETEEEEEEKSPARGRGKDSEDEYEEDAEEDEEERGKSNRYSDEDEEEEEVAGGRAEKDHRGSGRKRKGIESDEEESPPRKAPTHRRKAVIDDSDED.

2 disordered regions span residues 1–214 and 415–625; these read MVKG…DMVL and EREK…SDED. 2 stretches are compositionally biased toward acidic residues: residues 40–55 and 63–80; these read DEAE…GEAE and EAES…PGES. Composition is skewed to basic and acidic residues over residues 97-113, 121-137, and 182-197; these read SEAR…EHGG, QEVV…KHYE, and EYVR…RSPI. A Phosphoserine modification is found at serine 203. Over residues 415–425 the composition is skewed to basic and acidic residues; that stretch reads EREKEKREKAE. Residues 415-539 adopt a coiled-coil conformation; the sequence is EREKEKREKA…ETEEEEEEKS (125 aa). A compositionally biased stretch (polar residues) spans 426-436; it reads SQNLKASTKLS. The segment covering 471–491 has biased composition (basic and acidic residues); that stretch reads YRSNRGYEEDLEAEAQRERRI. Residues 492–501 show a composition bias toward basic residues; that stretch reads LNAKKSHKGI. The segment covering 523–537 has biased composition (acidic residues); sequence EREESEYETEEEEEE. Positions 538–547 are enriched in basic and acidic residues; that stretch reads KSPARGRGKD. Residues serine 548, serine 570, serine 600, serine 605, and serine 622 each carry the phosphoserine modification. Acidic residues predominate over residues 548–561; it reads SEDEYEEDAEEDEE.

This sequence belongs to the LEO1 family. Component of the nuclear PAF1 complex (PAF1C), which consists of VIP2/ELF7/PAF1, VIP3/SKI8/WDR61, VIP4/LEO1, VIP5/RTF1, VIP6/ELF8/CTR9 and CDC73. Interacts with VIP3 and VIP6. As to expression, expressed in roots, shoot apices, stems, cauline leaves, inflorescence apices and flowers.

It localises to the nucleus. In terms of biological role, component of the PAF1 complex (PAF1C) which is involved in histone modifications such as methylation on histone H3 'Lys-4' (H3K4me3). Involved in regulation of flowering time. Required for the expression of the flowering repressor and MADS box gene FLC. Involved in the control of seed dormancy and germination. The chain is Protein LEO1 homolog from Arabidopsis thaliana (Mouse-ear cress).